Reading from the N-terminus, the 396-residue chain is 1-deoxy-D-xylulose 5-phosphate reductoisomerase (396 aa).

NADPH is bound by residues Thr17, Gly18, Ser19, Ile20, Asn47, and Asn130. Residue Lys131 coordinates 1-deoxy-D-xylulose 5-phosphate. Glu132 serves as a coordination point for NADPH. Asp156 lines the Mn(2+) pocket. Residues Ser157, Glu158, Ser182, and His205 each coordinate 1-deoxy-D-xylulose 5-phosphate. Mn(2+) is bound at residue Glu158. Gly211 provides a ligand contact to NADPH. The 1-deoxy-D-xylulose 5-phosphate site is built by Ser218, Asn223, Lys224, and Glu227. Glu227 is a Mn(2+) binding site.

This sequence belongs to the DXR family. The cofactor is Mg(2+). Mn(2+) is required as a cofactor.

The enzyme catalyses 2-C-methyl-D-erythritol 4-phosphate + NADP(+) = 1-deoxy-D-xylulose 5-phosphate + NADPH + H(+). It functions in the pathway isoprenoid biosynthesis; isopentenyl diphosphate biosynthesis via DXP pathway; isopentenyl diphosphate from 1-deoxy-D-xylulose 5-phosphate: step 1/6. In terms of biological role, catalyzes the NADPH-dependent rearrangement and reduction of 1-deoxy-D-xylulose-5-phosphate (DXP) to 2-C-methyl-D-erythritol 4-phosphate (MEP). The sequence is that of 1-deoxy-D-xylulose 5-phosphate reductoisomerase from Rhizobium etli (strain ATCC 51251 / DSM 11541 / JCM 21823 / NBRC 15573 / CFN 42).